The chain runs to 775 residues: Mitochondrial intermediate peptidase (775 aa).

The transit peptide at 1–28 directs the protein to the mitochondrion; the sequence is MIARPARDVLSSATKKQFRFRGCLAARH. His-558 serves as a coordination point for Zn(2+). Residue Glu-559 is part of the active site. 2 residues coordinate Zn(2+): His-562 and His-565.

The protein belongs to the peptidase M3 family. Zn(2+) serves as cofactor.

Its subcellular location is the mitochondrion matrix. It catalyses the reaction Release of an N-terminal octapeptide as second stage of processing of some proteins imported into the mitochondrion.. Its function is as follows. Cleaves proteins, imported into the mitochondrion, to their mature size. While most mitochondrial precursor proteins are processed to the mature form in one step by mitochondrial processing peptidase (MPP), the sequential cleavage by MIP of an octapeptide after initial processing by MPP is a required step for a subgroup of nuclear-encoded precursor proteins destined for the matrix or the inner membrane. The protein is Mitochondrial intermediate peptidase (OCT1) of Schizophyllum commune (Split gill fungus).